The chain runs to 133 residues: Small ribosomal subunit protein uS15 (133 aa).

The protein belongs to the universal ribosomal protein uS15 family. In terms of assembly, part of the 30S ribosomal subunit.

This is Small ribosomal subunit protein uS15 from Methanosphaera stadtmanae (strain ATCC 43021 / DSM 3091 / JCM 11832 / MCB-3).